The following is a 219-amino-acid chain: Ribose-5-phosphate isomerase A (219 aa).

Residues 28–31 (SGST), 81–84 (DGAD), and 94–97 (KGGG) each bind substrate. The active-site Proton acceptor is the glutamate 103. Position 121 (lysine 121) interacts with substrate.

Belongs to the ribose 5-phosphate isomerase family. Homodimer.

It carries out the reaction aldehydo-D-ribose 5-phosphate = D-ribulose 5-phosphate. It functions in the pathway carbohydrate degradation; pentose phosphate pathway; D-ribose 5-phosphate from D-ribulose 5-phosphate (non-oxidative stage): step 1/1. In terms of biological role, catalyzes the reversible conversion of ribose-5-phosphate to ribulose 5-phosphate. The sequence is that of Ribose-5-phosphate isomerase A from Actinobacillus pleuropneumoniae serotype 3 (strain JL03).